The sequence spans 445 residues: Methionine aminopeptidase 2 (445 aa).

A disordered region spans residues 1–89 (MAAQAPVDEI…DPPRVLISQL (89 aa)). Residues 60 to 74 (AKKKKKRKPKKKKKN) show a composition bias toward basic residues. H198 provides a ligand contact to substrate. Residues D218, D229, and H298 each coordinate a divalent metal cation. H306 provides a ligand contact to substrate. Residues E331 and E426 each coordinate a divalent metal cation.

It belongs to the peptidase M24A family. Methionine aminopeptidase eukaryotic type 2 subfamily. The cofactor is Co(2+). Zn(2+) serves as cofactor. Requires Mn(2+) as cofactor. Fe(2+) is required as a cofactor.

It is found in the cytoplasm. It catalyses the reaction Release of N-terminal amino acids, preferentially methionine, from peptides and arylamides.. Its function is as follows. Cotranslationally removes the N-terminal methionine from nascent proteins. The N-terminal methionine is often cleaved when the second residue in the primary sequence is small and uncharged (Met-Ala-, Cys, Gly, Pro, Ser, Thr, or Val). This Podospora anserina (strain S / ATCC MYA-4624 / DSM 980 / FGSC 10383) (Pleurage anserina) protein is Methionine aminopeptidase 2.